Reading from the N-terminus, the 64-residue chain is Large ribosomal subunit protein bL35 (64 aa).

The disordered stretch occupies residues 1–20; it reads MKQKTHKGTAKRIKVTGSGK.

Belongs to the bacterial ribosomal protein bL35 family.

This is Large ribosomal subunit protein bL35 from Corynebacterium urealyticum (strain ATCC 43042 / DSM 7109).